We begin with the raw amino-acid sequence, 164 residues long: MAFKDNAVELEERVVAINRVTKVVKGGRRLRFAALVVVGDRNGRVGFGTGKAQEVPEAIRKAVEDAKKNLIEVPMVGTTIPHEVLSEFGGAKVLLKPAVEGSGVAAGGAVRAVIELAGVADVTSKSLGSNTPINIVRATVEGLKQLKRAEEVAALRGISVSDLA.

The region spanning 10–73 is the S5 DRBM domain; that stretch reads LEERVVAINR…EDAKKNLIEV (64 aa).

The protein belongs to the universal ribosomal protein uS5 family. In terms of assembly, part of the 30S ribosomal subunit. Contacts proteins S4 and S8.

Functionally, with S4 and S12 plays an important role in translational accuracy. Located at the back of the 30S subunit body where it stabilizes the conformation of the head with respect to the body. This is Small ribosomal subunit protein uS5 from Streptococcus gordonii (strain Challis / ATCC 35105 / BCRC 15272 / CH1 / DL1 / V288).